Here is a 488-residue protein sequence, read N- to C-terminus: Proline--tRNA ligase (488 aa).

The protein belongs to the class-II aminoacyl-tRNA synthetase family. ProS type 3 subfamily. In terms of assembly, homodimer.

Its subcellular location is the cytoplasm. The catalysed reaction is tRNA(Pro) + L-proline + ATP = L-prolyl-tRNA(Pro) + AMP + diphosphate. In terms of biological role, catalyzes the attachment of proline to tRNA(Pro) in a two-step reaction: proline is first activated by ATP to form Pro-AMP and then transferred to the acceptor end of tRNA(Pro). This is Proline--tRNA ligase from Borreliella burgdorferi (strain ZS7) (Borrelia burgdorferi).